The chain runs to 154 residues: Prefoldin subunit 5 (154 aa).

Ala-2 carries the post-translational modification N-acetylalanine. Lys-42 carries the post-translational modification N6-acetyllysine. The residue at position 56 (Ser-56) is a Phosphoserine.

It belongs to the prefoldin subunit alpha family. As to quaternary structure, heterohexamer of two PFD-alpha type and four PFD-beta type subunits.

It is found in the nucleus. Its function is as follows. Binds specifically to cytosolic chaperonin (c-CPN) and transfers target proteins to it. Binds to nascent polypeptide chain and promotes folding in an environment in which there are many competing pathways for nonnative proteins. Represses the transcriptional activity of MYC. The protein is Prefoldin subunit 5 (PFDN5) of Pongo abelii (Sumatran orangutan).